Here is a 396-residue protein sequence, read N- to C-terminus: S-adenosylmethionine synthase 1 (396 aa).

E13 contacts Mg(2+). H19 serves as a coordination point for ATP. Residue E47 coordinates K(+). The L-methionine site is built by E60 and Q103. ATP-binding positions include 171–173, 239–242, D250, 256–257, A273, K277, and K281; these read DGK, SGRF, and RK. D250 serves as a coordination point for L-methionine. K281 contributes to the L-methionine binding site.

The protein belongs to the AdoMet synthase family. As to quaternary structure, homotetramer. It depends on Mn(2+) as a cofactor. The cofactor is Mg(2+). Co(2+) is required as a cofactor. K(+) serves as cofactor.

It localises to the cytoplasm. It catalyses the reaction L-methionine + ATP + H2O = S-adenosyl-L-methionine + phosphate + diphosphate. The protein operates within amino-acid biosynthesis; S-adenosyl-L-methionine biosynthesis; S-adenosyl-L-methionine from L-methionine: step 1/1. Functionally, catalyzes the formation of S-adenosylmethionine from methionine and ATP. The reaction comprises two steps that are both catalyzed by the same enzyme: formation of S-adenosylmethionine (AdoMet) and triphosphate, and subsequent hydrolysis of the triphosphate. May be involved in the synthesis of betain in response to abiotic stress such as high salinity. The chain is S-adenosylmethionine synthase 1 (SAMS1) from Beta vulgaris (Sugar beet).